The chain runs to 230 residues: Orotidine 5'-phosphate decarboxylase (230 aa).

Substrate contacts are provided by residues Asp-11, Lys-34, 61–70 (DLKLHDIPNT), Thr-117, Arg-179, Gln-188, Gly-208, and Arg-209. Lys-63 acts as the Proton donor in catalysis.

This sequence belongs to the OMP decarboxylase family. Type 1 subfamily. As to quaternary structure, homodimer.

The enzyme catalyses orotidine 5'-phosphate + H(+) = UMP + CO2. It participates in pyrimidine metabolism; UMP biosynthesis via de novo pathway; UMP from orotate: step 2/2. Functionally, catalyzes the decarboxylation of orotidine 5'-monophosphate (OMP) to uridine 5'-monophosphate (UMP). The protein is Orotidine 5'-phosphate decarboxylase of Streptococcus uberis (strain ATCC BAA-854 / 0140J).